Reading from the N-terminus, the 185-residue chain is Elongation factor P (185 aa).

The protein belongs to the elongation factor P family.

It localises to the cytoplasm. It participates in protein biosynthesis; polypeptide chain elongation. Involved in peptide bond synthesis. Stimulates efficient translation and peptide-bond synthesis on native or reconstituted 70S ribosomes in vitro. Probably functions indirectly by altering the affinity of the ribosome for aminoacyl-tRNA, thus increasing their reactivity as acceptors for peptidyl transferase. This Dechloromonas aromatica (strain RCB) protein is Elongation factor P.